Consider the following 731-residue polypeptide: 1,4-alpha-glucan branching enzyme GlgB (731 aa).

Asp-412 functions as the Nucleophile in the catalytic mechanism. Glu-465 acts as the Proton donor in catalysis.

This sequence belongs to the glycosyl hydrolase 13 family. GlgB subfamily. Monomer.

The catalysed reaction is Transfers a segment of a (1-&gt;4)-alpha-D-glucan chain to a primary hydroxy group in a similar glucan chain.. It participates in glycan biosynthesis; glycogen biosynthesis. Functionally, catalyzes the formation of the alpha-1,6-glucosidic linkages in glycogen by scission of a 1,4-alpha-linked oligosaccharide from growing alpha-1,4-glucan chains and the subsequent attachment of the oligosaccharide to the alpha-1,6 position. In Bordetella pertussis (strain Tohama I / ATCC BAA-589 / NCTC 13251), this protein is 1,4-alpha-glucan branching enzyme GlgB.